We begin with the raw amino-acid sequence, 239 residues long: UPF0126 membrane protein VC_2382 (239 aa).

Helical transmembrane passes span 38–58 (LLYL…VLLA), 62–82 (KMDP…GGTI), 86–106 (ALGA…VIMI), 122–142 (AWWI…GIGV), 153–173 (LIAI…RDVL), and 185–205 (VYAT…AMGY).

The protein belongs to the UPF0126 family.

It localises to the cell membrane. The polypeptide is UPF0126 membrane protein VC_2382 (Vibrio cholerae serotype O1 (strain ATCC 39315 / El Tor Inaba N16961)).